We begin with the raw amino-acid sequence, 416 residues long: Thyroid hormone receptor alpha-A (416 aa).

Residues 1-13 (MEPMSNKQDSNSS) are compositionally biased toward polar residues. The tract at residues 1 to 37 (MEPMSNKQDSNSSEGDEKGWPDVPKRKRKNSQCSMKS) is disordered. The tract at residues 1-58 (MEPMSNKQDSNSSEGDEKGWPDVPKRKRKNSQCSMKSMSALSVSVPGYIPSYLEKDEP) is modulating. Positions 15–24 (GDEKGWPDVP) are enriched in basic and acidic residues. 2 NR C4-type zinc fingers span residues 59–79 (CVVC…CEGC) and 97–121 (CKYE…FKKC). The segment at residues 59 to 126 (CVVCGDKATG…RFKKCISVGM (68 aa)) is a DNA-binding region (nuclear receptor). The region spanning 169–413 (AEWELIRMAT…PPLFLEVFED (245 aa)) is the NR LBD domain.

It belongs to the nuclear hormone receptor family. NR1 subfamily.

It localises to the nucleus. In terms of biological role, high affinity receptor for triiodothyronine. This chain is Thyroid hormone receptor alpha-A (thra1), found in Paralichthys olivaceus (Bastard halibut).